The sequence spans 528 residues: Na(+)/H(+) antiporter NhaB (528 aa).

11 consecutive transmembrane segments (helical) span residues 23–43 (VAIIAFLIINPIVFFLIDPFV), 45–65 (GWLLVAEFIFTLAMALKCYPL), 90–110 (LVANIEVLLLLVFMVAGIYFM), 136–156 (CFAAAFLSAFLDALTVIAVVI), 204–224 (LLMHAGVGTALGGVTTMVGEP), 242–262 (IRMAPVTLPVFFCGLITCAIV), 305–325 (GLIAVWLIAALALHLAAVGLI), 350–370 (EEALPFTALLAVFFAVVAVII), 392–412 (LALFYVANGLLSMVSDNVFVG), 450–470 (ATPNGQAAFLFLLTSALAPLI), and 479–499 (IMALPYTIVLAIVGLMGIMFF).

This sequence belongs to the NhaB Na(+)/H(+) (TC 2.A.34) antiporter family.

The protein resides in the cell inner membrane. The enzyme catalyses 2 Na(+)(in) + 3 H(+)(out) = 2 Na(+)(out) + 3 H(+)(in). Na(+)/H(+) antiporter that extrudes sodium in exchange for external protons. The sequence is that of Na(+)/H(+) antiporter NhaB from Vibrio campbellii (strain ATCC BAA-1116).